The chain runs to 66 residues: uncharacterized protein (66 aa).

One can recognise an HTH cro/C1-type domain in the interval 5-59 (VKELRARFGYSQEKLGETVGVTRQTVAAIEKGDYVPSLLLALKICKAFSMKMEDV). A DNA-binding region (H-T-H motif) is located at residues 16-35 (QEKLGETVGVTRQTVAAIEK).

This is an uncharacterized protein from Bacillus subtilis (strain 168).